The primary structure comprises 168 residues: Large ribosomal subunit protein uL10 (168 aa).

It belongs to the universal ribosomal protein uL10 family. In terms of assembly, part of the ribosomal stalk of the 50S ribosomal subunit. The N-terminus interacts with L11 and the large rRNA to form the base of the stalk. The C-terminus forms an elongated spine to which L12 dimers bind in a sequential fashion forming a multimeric L10(L12)X complex.

Forms part of the ribosomal stalk, playing a central role in the interaction of the ribosome with GTP-bound translation factors. This chain is Large ribosomal subunit protein uL10, found in Pediococcus pentosaceus (strain ATCC 25745 / CCUG 21536 / LMG 10740 / 183-1w).